The chain runs to 350 residues: Probable dual-specificity RNA methyltransferase RlmN (350 aa).

The active-site Proton acceptor is the E93. The region spanning 99–327 (SSKRLTVCVS…VSVRYSRGVQ (229 aa)) is the Radical SAM core domain. Residues C106 and C332 are joined by a disulfide bond. The [4Fe-4S] cluster site is built by C113, C117, and C120. Residues 160–161 (GE), S190, 213–215 (SLH), and N289 contribute to the S-adenosyl-L-methionine site. The active-site S-methylcysteine intermediate is the C332.

The protein belongs to the radical SAM superfamily. RlmN family. It depends on [4Fe-4S] cluster as a cofactor.

The protein resides in the cytoplasm. The enzyme catalyses adenosine(2503) in 23S rRNA + 2 reduced [2Fe-2S]-[ferredoxin] + 2 S-adenosyl-L-methionine = 2-methyladenosine(2503) in 23S rRNA + 5'-deoxyadenosine + L-methionine + 2 oxidized [2Fe-2S]-[ferredoxin] + S-adenosyl-L-homocysteine. It carries out the reaction adenosine(37) in tRNA + 2 reduced [2Fe-2S]-[ferredoxin] + 2 S-adenosyl-L-methionine = 2-methyladenosine(37) in tRNA + 5'-deoxyadenosine + L-methionine + 2 oxidized [2Fe-2S]-[ferredoxin] + S-adenosyl-L-homocysteine. Specifically methylates position 2 of adenine 2503 in 23S rRNA and position 2 of adenine 37 in tRNAs. The sequence is that of Probable dual-specificity RNA methyltransferase RlmN from Synechocystis sp. (strain ATCC 27184 / PCC 6803 / Kazusa).